The following is a 182-amino-acid chain: Thioredoxin X, chloroplastic (182 aa).

Residues 1-67 (MDSIVSSSTI…TRKSSSSVIR (67 aa)) constitute a chloroplast transit peptide. The region spanning 68 to 177 (CGGIKEIGES…LKEYIDGLLN (110 aa)) is the Thioredoxin domain. Active-site nucleophile residues include cysteine 99 and cysteine 102. A disulfide bridge connects residues cysteine 99 and cysteine 102.

This sequence belongs to the thioredoxin family. In terms of tissue distribution, predominantly expressed in leaves.

The protein resides in the plastid. The protein localises to the chloroplast stroma. Its function is as follows. Probable thiol-disulfide oxidoreductase that may participate in various redox reactions. The protein is Thioredoxin X, chloroplastic (ATHX) of Arabidopsis thaliana (Mouse-ear cress).